The sequence spans 179 residues: Large ribosomal subunit protein uL5 (179 aa).

At K3 the chain carries N6-acetyllysine.

This sequence belongs to the universal ribosomal protein uL5 family. In terms of assembly, part of the 50S ribosomal subunit; part of the 5S rRNA/L5/L18/L25 subcomplex. Contacts the 5S rRNA and the P site tRNA. Forms a bridge to the 30S subunit in the 70S ribosome.

Functionally, this is one of the proteins that bind and probably mediate the attachment of the 5S RNA into the large ribosomal subunit, where it forms part of the central protuberance. In the 70S ribosome it contacts protein S13 of the 30S subunit (bridge B1b), connecting the 2 subunits; this bridge is implicated in subunit movement. Contacts the P site tRNA; the 5S rRNA and some of its associated proteins might help stabilize positioning of ribosome-bound tRNAs. In Escherichia coli O45:K1 (strain S88 / ExPEC), this protein is Large ribosomal subunit protein uL5.